We begin with the raw amino-acid sequence, 352 residues long: tRNA-specific 2-thiouridylase MnmA (352 aa).

6–13 (AVSGGTDS) serves as a coordination point for ATP. Residue cysteine 92 is the Nucleophile of the active site. Cysteine 92 and cysteine 189 are disulfide-bonded. Glycine 116 serves as a coordination point for ATP. The segment at 139–141 (KDQ) is interaction with tRNA. The Cysteine persulfide intermediate role is filled by cysteine 189. The interval 294–295 (RY) is interaction with tRNA.

The protein belongs to the MnmA/TRMU family.

The protein resides in the cytoplasm. It catalyses the reaction S-sulfanyl-L-cysteinyl-[protein] + uridine(34) in tRNA + AH2 + ATP = 2-thiouridine(34) in tRNA + L-cysteinyl-[protein] + A + AMP + diphosphate + H(+). Catalyzes the 2-thiolation of uridine at the wobble position (U34) of tRNA, leading to the formation of s(2)U34. The polypeptide is tRNA-specific 2-thiouridylase MnmA (Lawsonia intracellularis (strain PHE/MN1-00)).